Here is a 456-residue protein sequence, read N- to C-terminus: SWI/SNF complex component SNF12 homolog (456 aa).

The region spanning 234–310 (HVPQKYKVLG…PQLLREHLSP (77 aa)) is the SWIB/MDM2 domain. Residues 435–456 (KQTTPNPTPQQISMAPSTPQTP) form a disordered region.

It belongs to the SMARCD family. Part of a SWI-SNF complex.

The protein localises to the nucleus. Functionally, involved in transcriptional activation and repression of select genes by chromatin remodeling (alteration of DNA-nucleosome topology). This chain is SWI/SNF complex component SNF12 homolog (snf12-1), found in Dictyostelium discoideum (Social amoeba).